Here is a 469-residue protein sequence, read N- to C-terminus: Phenolic glucoside malonyltransferase 1 (469 aa).

Met1 bears the N-acetylmethionine mark. His169 serves as the catalytic Proton acceptor. Positions 169–173 (HAVLD) match the HXXXD motif motif. Residue 291–292 (ST) coordinates malonyl-CoA. The active-site Proton acceptor is Asp413. The short motif at 413 to 417 (DFGWG) is the DFGWG motif element.

The protein belongs to the plant acyltransferase family. Phenolic glucoside malonyltransferase subfamily.

It carries out the reaction a flavonol 3-O-beta-D-glucoside + malonyl-CoA = a flavonol 3-O-(6-O-malonyl-beta-D-glucoside) + CoA. The enzyme catalyses a flavonol 7-O-beta-D-glucoside + malonyl-CoA = a flavonol 7-O-(6-O-malonyl-beta-D-glucoside) + CoA. Functionally, malonyltransferase acting on xenobiotic glucosides. Has activity toward 2-Naphthol glucoside (2NAG), 1-Naphthol glucoside (1NAG), kaempferol 7-O-glucoside, kaempferol 3-O-glucoside, hydroxycoumarin glucosides, phenol-glucosides and isoflavone glucoside (daidzin), but not toward 4-coumaroyl glucoside, kaempferol 3,7-O-diglucoside, salicylic acid glucoside and phlorizin. In vivo, seems to be involved in the malonylation of 2-Naphthol glucoside while PMAT2 would be involved in the malonylation of 4-methylumbelliferone glucoside or 4-nitrophenyl glucoside. This chain is Phenolic glucoside malonyltransferase 1 (PMAT1), found in Arabidopsis thaliana (Mouse-ear cress).